The sequence spans 317 residues: 2-keto-3-deoxygluconate permease 1 (317 aa).

Helical transmembrane passes span 10–30 (VPGG…TFAP), 47–67 (AAPL…VKAA), 82–102 (LLVA…EGIF), 106–126 (GVAI…ALVG), 134–154 (VGAI…IALG), 159–179 (ANIP…GMIL), 195–215 (PLLI…EMLL), 217–237 (GGLA…FFNI), 248–268 (IAGA…LAIA), and 279–299 (AAAA…TPVL).

This sequence belongs to the KdgT transporter family.

It localises to the cell inner membrane. The catalysed reaction is 2-dehydro-3-deoxy-D-gluconate(in) + H(+)(in) = 2-dehydro-3-deoxy-D-gluconate(out) + H(+)(out). Catalyzes the proton-dependent uptake of 2-keto-3-deoxygluconate (KDG) into the cell. This chain is 2-keto-3-deoxygluconate permease 1, found in Salmonella typhi.